A 90-amino-acid polypeptide reads, in one-letter code: 10 kDa anti-sigma factor (90 aa).

Interacts with the host sigma factor RpoD, and thereby inhibits its interaction with the catalytic core of the host RNA polymerase.

Its function is as follows. Transcriptional inhibitor. Inhibits sigma 70-directed transcription by weakening its interaction with the core of the host's RNA polymerase. This allows Gp55 to successfully compete for the core enzyme. Plays an important role during the prereplicative period of phage T4 development. This Enterobacteria phage T4 (Bacteriophage T4) protein is 10 kDa anti-sigma factor (asiA).